The primary structure comprises 264 residues: S-adenosylmethionine decarboxylase proenzyme (264 aa).

Catalysis depends on Ser112, which acts as the Schiff-base intermediate with substrate; via pyruvic acid. Ser112 carries the post-translational modification Pyruvic acid (Ser); by autocatalysis. His117 serves as the catalytic Proton acceptor; for processing activity. Cys140 acts as the Proton donor; for catalytic activity in catalysis.

It belongs to the prokaryotic AdoMetDC family. Type 2 subfamily. As to quaternary structure, heterooctamer of four alpha and four beta chains arranged as a tetramer of alpha/beta heterodimers. The cofactor is pyruvate. Post-translationally, is synthesized initially as an inactive proenzyme. Formation of the active enzyme involves a self-maturation process in which the active site pyruvoyl group is generated from an internal serine residue via an autocatalytic post-translational modification. Two non-identical subunits are generated from the proenzyme in this reaction, and the pyruvate is formed at the N-terminus of the alpha chain, which is derived from the carboxyl end of the proenzyme. The post-translation cleavage follows an unusual pathway, termed non-hydrolytic serinolysis, in which the side chain hydroxyl group of the serine supplies its oxygen atom to form the C-terminus of the beta chain, while the remainder of the serine residue undergoes an oxidative deamination to produce ammonia and the pyruvoyl group blocking the N-terminus of the alpha chain.

The catalysed reaction is S-adenosyl-L-methionine + H(+) = S-adenosyl 3-(methylsulfanyl)propylamine + CO2. Its pathway is amine and polyamine biosynthesis; S-adenosylmethioninamine biosynthesis; S-adenosylmethioninamine from S-adenosyl-L-methionine: step 1/1. Its function is as follows. Catalyzes the decarboxylation of S-adenosylmethionine to S-adenosylmethioninamine (dcAdoMet), the propylamine donor required for the synthesis of the polyamines spermine and spermidine from the diamine putrescine. This chain is S-adenosylmethionine decarboxylase proenzyme, found in Klebsiella pneumoniae (strain 342).